A 108-amino-acid chain; its full sequence is Urease subunit beta (108 aa).

This sequence belongs to the urease beta subunit family. Heterotrimer of UreA (gamma), UreB (beta) and UreC (alpha) subunits. Three heterotrimers associate to form the active enzyme.

The protein resides in the cytoplasm. The enzyme catalyses urea + 2 H2O + H(+) = hydrogencarbonate + 2 NH4(+). It participates in nitrogen metabolism; urea degradation; CO(2) and NH(3) from urea (urease route): step 1/1. The protein is Urease subunit beta of Trichormus variabilis (strain ATCC 29413 / PCC 7937) (Anabaena variabilis).